A 325-amino-acid polypeptide reads, in one-letter code: Biotin synthase (325 aa).

Positions phenylalanine 49–arginine 278 constitute a Radical SAM core domain. 3 residues coordinate [4Fe-4S] cluster: cysteine 67, cysteine 71, and cysteine 74. [2Fe-2S] cluster contacts are provided by serine 111, cysteine 143, cysteine 203, and arginine 273.

The protein belongs to the radical SAM superfamily. Biotin synthase family. As to quaternary structure, homodimer. The cofactor is [4Fe-4S] cluster. Requires [2Fe-2S] cluster as cofactor.

It carries out the reaction (4R,5S)-dethiobiotin + (sulfur carrier)-SH + 2 reduced [2Fe-2S]-[ferredoxin] + 2 S-adenosyl-L-methionine = (sulfur carrier)-H + biotin + 2 5'-deoxyadenosine + 2 L-methionine + 2 oxidized [2Fe-2S]-[ferredoxin]. It functions in the pathway cofactor biosynthesis; biotin biosynthesis; biotin from 7,8-diaminononanoate: step 2/2. Functionally, catalyzes the conversion of dethiobiotin (DTB) to biotin by the insertion of a sulfur atom into dethiobiotin via a radical-based mechanism. The protein is Biotin synthase of Clostridium tetani (strain Massachusetts / E88).